The chain runs to 566 residues: Chondroitin sulfate proteoglycan 5 (566 aa).

Residues 1–30 form the signal peptide; sequence MGRAGGGGPGRGPPPLLLFLGAALVLASGA. The Extracellular portion of the chain corresponds to 31–423; the sequence is VPAREAGSAV…SIITDFQVMC (393 aa). Residue Ser38 is glycosylated (O-linked (Xyl...) (chondroitin sulfate) serine). The tract at residues 39–82 is disordered; that stretch reads AVEAEELVKGSPAWEPPANDTREEAGPPAAGEDEASWTAPGGEL. N-linked (GlcNAc...) asparagine glycosylation is present at Asn57. Ser117 carries an O-linked (Xyl...) (chondroitin sulfate) serine glycan. 3 disordered regions span residues 143 to 202, 215 to 248, and 262 to 354; these read IPEA…LEPQ, GLDG…TPSW, and ESDF…ASSE. Ser165 carries an O-linked (GalNAc...) serine glycan. The segment at 264 to 301 is interaction with TNC and TNR; that stretch reads DFYPTTSFYDDLDEEEEEEEDDKDAVGGGDLEDENELL. A compositionally biased stretch (acidic residues) spans 273-286; it reads DDLDEEEEEEEDDK. In terms of domain architecture, EGF-like spans 371 to 413; the sequence is RSVCDLFPSYCHNGGQCYLVENIGAFCRCNTQDYIWHKGMRCE. Cystine bridges form between Cys374–Cys387, Cys381–Cys397, and Cys399–Cys412. A helical transmembrane segment spans residues 424 to 444; it reads VAVGSAALVLLLLFMMTVFFA. The interval 442-460 is interaction with GOPC; sequence FFAKKLYLLKTENTKLRRT. Topologically, residues 445–566 are cytoplasmic; sequence KKLYLLKTEN…DVNCLQNNLT (122 aa). Phosphoserine is present on residues Ser467, Ser475, Ser483, and Ser543.

As to quaternary structure, binds TNR and probably TNC. Interacts with ERBB3 and GOPC. Interacts with MDK; this interaction is independent of the presence of chondroitin sulfate chains and promotes elongation of oligodendroglial precursor-like cells. In terms of processing, N-glycosylated. Post-translationally, O-glycosylated; contains chondroitin sulfate glycans. Part-time proteoglycan, expressed in part as a proteoglycan exhibiting chondroitin sulfate glycans and in part as a non-proteoglycan form. The relative amount of both forms depends on tissues and tissue maturation. Phosphorylated; in intracellular and extracellular parts. As to expression, detected in cerebrospinal fluid (at protein level). Detected in urine (at protein level). Expressed in brain (at protein level).

It is found in the cell membrane. It localises to the synaptic cell membrane. The protein resides in the endoplasmic reticulum membrane. The protein localises to the golgi apparatus membrane. Its subcellular location is the cell surface. It is found in the secreted. Functionally, may function as a growth and differentiation factor involved in neuritogenesis. May induce ERBB3 activation. In Homo sapiens (Human), this protein is Chondroitin sulfate proteoglycan 5 (CSPG5).